The following is a 206-amino-acid chain: 2-oxoglutarate-dependent dioxygenase iboH (206 aa).

The Fe2OG dioxygenase domain maps to 51–157; that stretch reads PSTTTLVLLH…RYSIAYFLRP (107 aa). Fe cation contacts are provided by histidine 75, aspartate 77, and histidine 134. Arginine 148 is a binding site for 2-oxoglutarate.

Belongs to the iron/ascorbate-dependent oxidoreductase family. Fe(2+) serves as cofactor.

The catalysed reaction is L-glutamate + 2-oxoglutarate + O2 = (3R)-3-hydroxy-L-glutamate + succinate + CO2. The protein operates within secondary metabolite biosynthesis. In terms of biological role, 2-oxoglutarate-dependent dioxygenase; part of the gene cluster that mediates the biosynthesis of the psychoactive metabolites ibotenic acid and muscimol. The first committed step is glutamate hydroxylation by the 2-oxoglutarate-dependent dioxygenase iboH, and the last step is decarboxylation of ibotenic acid to muscimol by the decarboxylase iboD. The order of the intermediate reactions is somewhat ambiguous. IboA likely activates the carboxylic acid at position 5 to introduce an amide bond, and the flavin monooxygenase iboF generates the N-O bond. There are several options for the latter step. One option is that iboF directly hydroxylates the amide nitrogen formed by iboA to produce a hydroxamic acid species. Another option is that iboF hydroxylates an external N-containing compound, whose resulting N-O bond is subsequently introduced into the hydroxyglutamate scaffold. The paralogous PLP-dependent cystathionine gamma-synthase-like enzymes iboG1 and iboG2 are likely involved in substitution of the OH group at position 3 by the O-N moiety. The first cyclic intermediate is most probably tricholomic acid which is likely desaturated to ibotenic acid by the cytochrome P450 monooxygenase iboC. The protein is 2-oxoglutarate-dependent dioxygenase iboH of Amanita muscaria (strain Koide BX008).